The chain runs to 1944 residues: Anaphase-promoting complex subunit 1 (1944 aa).

Ser51 and Ser60 each carry phosphoserine. At Thr291 the chain carries Phosphothreonine. Positions 312–343 (ESPVASPFQNYSSIHSQSRSTSSPSLHSRSPS) are disordered. Residues Ser313, Ser341, Ser343, Ser355, Ser362, Ser373, and Ser377 each carry the phosphoserine modification. Over residues 323 to 343 (SSIHSQSRSTSSPSLHSRSPS) the composition is skewed to low complexity. Positions 370 to 395 (NLSSHSQSPKRHSISHSPSGSFNDSF) are disordered. A compositionally biased stretch (polar residues) spans 384–393 (SHSPSGSFND). Thr537 bears the Phosphothreonine mark. 2 positions are modified to phosphoserine: Ser547 and Ser555. The residue at position 571 (Tyr571) is a Phosphotyrosine. Phosphoserine occurs at positions 680, 686, and 688. The tract at residues 991 to 1014 (NLPRGKSVLSSEVSSGTEAEEEDD) is disordered. Residues 998–1007 (VLSSEVSSGT) show a composition bias toward polar residues. PC repeat units lie at residues 1297–1325 (AAGLALGMVCLGHGSNLIGMSDLNVPEQL), 1366–1404 (GATLALAMIYLKTNNRSIADWLRAPDTMYLLDFVKPEFL), 1467–1501 (GACLSLGFRFAGSENLSAFSCLHKFAKDFMNYLSA), and 1520–1552 (LLSLAMVMAGSGNLKVLQLCRFLHMKTGGEMNY).

Belongs to the APC1 family. In terms of assembly, the mammalian APC/C is composed at least of 14 distinct subunits ANAPC1, ANAPC2, CDC27/APC3, ANAPC4, ANAPC5, CDC16/APC6, ANAPC7, CDC23/APC8, ANAPC10, ANAPC11, CDC26/APC12, ANAPC13, ANAPC15 and ANAPC16 that assemble into a complex of at least 19 chains with a combined molecular mass of around 1.2 MDa; APC/C interacts with FZR1 and FBXO5. In terms of processing, phosphorylated. Phosphorylation on Ser-355 occurs specifically during mitosis. As to expression, abundantly expressed in proliferating fibroblasts, juvenile testis, adult brain and epididymis.

The protein operates within protein modification; protein ubiquitination. Functionally, component of the anaphase promoting complex/cyclosome (APC/C), a cell cycle-regulated E3 ubiquitin ligase that controls progression through mitosis and the G1 phase of the cell cycle. The APC/C complex acts by mediating ubiquitination and subsequent degradation of target proteins: it mainly mediates the formation of 'Lys-11'-linked polyubiquitin chains and, to a lower extent, the formation of 'Lys-48'- and 'Lys-63'-linked polyubiquitin chains. The APC/C complex catalyzes assembly of branched 'Lys-11'-/'Lys-48'-linked branched ubiquitin chains on target proteins. The chain is Anaphase-promoting complex subunit 1 (Anapc1) from Mus musculus (Mouse).